Reading from the N-terminus, the 217-residue chain is Uracil-DNA glycosylase (217 aa).

Aspartate 62 (proton acceptor) is an active-site residue.

This sequence belongs to the uracil-DNA glycosylase (UDG) superfamily. UNG family.

It is found in the cytoplasm. The catalysed reaction is Hydrolyzes single-stranded DNA or mismatched double-stranded DNA and polynucleotides, releasing free uracil.. Functionally, excises uracil residues from the DNA which can arise as a result of misincorporation of dUMP residues by DNA polymerase or due to deamination of cytosine. The sequence is that of Uracil-DNA glycosylase from Streptococcus pneumoniae (strain P1031).